The chain runs to 333 residues: L-lactate dehydrogenase B chain (333 aa).

NAD(+) is bound by residues 29-57 (GQVGMACAISILGKRLGDELALVDVWEDK) and Arg-99. 3 residues coordinate substrate: Arg-106, Asn-138, and Arg-169. Asn-138 is a binding site for NAD(+). His-193 acts as the Proton acceptor in catalysis. Residue Thr-248 coordinates substrate.

This sequence belongs to the LDH/MDH superfamily. LDH family. As to quaternary structure, homotetramer.

The protein resides in the cytoplasm. It catalyses the reaction (S)-lactate + NAD(+) = pyruvate + NADH + H(+). Its pathway is fermentation; pyruvate fermentation to lactate; (S)-lactate from pyruvate: step 1/1. In terms of biological role, interconverts simultaneously and stereospecifically pyruvate and lactate with concomitant interconversion of NADH and NAD(+). The sequence is that of L-lactate dehydrogenase B chain (LDHB) from Alligator mississippiensis (American alligator).